A 132-amino-acid polypeptide reads, in one-letter code: Putative holo-[acyl-carrier-protein] synthase (132 aa).

Mg(2+)-binding residues include Asp-6 and Glu-67.

This sequence belongs to the P-Pant transferase superfamily. AcpS family.

The enzyme catalyses apo-[ACP] + CoA = holo-[ACP] + adenosine 3',5'-bisphosphate + H(+). Functionally, transfers the 4'-phosphopantetheine moiety from coenzyme A to a Ser of acyl-carrier-protein. In Schizosaccharomyces pombe (strain 972 / ATCC 24843) (Fission yeast), this protein is Putative holo-[acyl-carrier-protein] synthase (new8).